The chain runs to 1658 residues: MEPDNTPSSRLRAAGVGGRAVFFCMVLYCTCCLRLAQAQSADVDVLQRLGLVGKRPPQGFIPIKSGVILTTRARIDVPVSSVIPVSLGSTFSIILSVCSHRINNAFLFTIVTKRKRLHLGVQFIPGQILVYLGQNSSVNFDYNVHNGQWHNLALEIQGQKVTLYTSCGNTSIQANLDFQNEETLDSEGSFRLGKMSQNSVQFEGAICQFDIHPSAQAAHNYCKYIKKQCREADTYRPNLPPLLPLLPLDPNRSTIQTPKVVTDINERHLSLTRDKMNINHEGQTTVPPMITQPTLQLPLQTTAQTTASIRNRTSQISPKPTQQNRKKAKKERNKLHILKEHQISVTDSPTSQQQNQVDIPTTTTPELSSTFRVSEMTTLAAQRPLPKETSFFEAKATFFESVTPAAMDGLQTFDLEPTQYSLLELTGLKGEPGLPGPPGPPGQPGLPGKRGPRGPSGPHGKPGPPGTPGPKGKKGNPGISPGRAPSGIKGDPGLVGLPGQPGQPGRKGQKGHPGPSGHPGDQGIRGPDGSPGAKGYPGRQGLPGPIGNMGPKGVRGFIGIPGIFGLPGADGERGLPGVPGKKGKMGRPGFPGDFGERGPPGPDGNPGEIGAPGPVGIPGFIGDMGPVGMVGPPGLIGPKGVPGNPGEPGLKGDKGELGLPGEPGEPGFQGDKGIQGSPGLPGVQGKPGPQGKIGDRGPDGLPGPLGPEGFPGDIGPPGQNGVEGPKGNAGVRGIPGPGGLPGLEGDQGPVGPAGAPGLEGRPGRKGISGNPGEEGMKGEPGMTGNPGMLGERGPVGFVGPFGEMGLAGEKGDRGETGQPGPPGEKGAMGHPGAPGERGLSGPAGAPGPHGSRGLSGTRGPKGTRGARGPDGPVGEKGMMGMKGPEGPPGKQGLSGQMGKIGETGEAGPTGFTGVQGPTGPPGAKGILGEPGPQGSPGVLGPLGEIGAIGLPGKAGDQGLPGEPGEKGAVGSPGNIGEQGLIGPRGDPGVDGEAGPSGPDGAKGEQGDVGLEGESGEKGVIGFKGTEGRTGDPGLIGVKGPEGKPGKIGERGKPGEKGSKGHQGQLGEMGALGEQGDTGFIGPKGSRGTTGFMGAPGKMGQQGEPGLVGYEGHQGPQGSLGSPGPKGEKGEQGDDGKVEGPPGPSGDIGPVGNRGDRGEPGDPGYPGLEGVQGERGKEGAPGVPGNSGPRGFPGPKGSKGNKGPKGKNSPRGESGNRGSPGPVGVPGPRGVIGREGFEGEPGLDGAAGKDGAKGMPGDLGRDGDVGLPGKPGPQGNAGAPGLPGVQGSFGPKGERGITGHSGPPGKRGLNGGMGFPGKQGDQGFKGQPGDAGEQGFPGVLGIFGPQGPPGDFGPVGIQGPKGPQGLMGMQGAIGPVGIIGPSGNPGPQGDKGNKGEMGVQGPRGPPGPRGPPGPPGLPAVAFSHENEALGAALHVFDSRSALRSEMYQDTDLPLLDQGSEIFKTLHYLSILIHSIKNPLGTQENPARMCRDLLECEHRLNDGTYWIDPNLGCSSDNIEVTCSFTSGGQTCLKPVTASKLEIGVSLIQMNFIHLLSSEAVQIITVHCLNVSVWASEDSKTPSSSMVYFKAWDGQIIEAGGFIEPDLLKDECWITDGRWHQTQFIFRTQDPNLLPIVEIYNLPSTKPGSHYHLEVGPVCFL.

An N-terminal signal peptide occupies residues 1–38; sequence MEPDNTPSSRLRAAGVGGRAVFFCMVLYCTCCLRLAQA. The 164-residue stretch at 66 to 229 folds into the Laminin G-like domain; the sequence is GVILTTRARI…NYCKYIKKQC (164 aa). Residues 308–323 show a composition bias toward polar residues; that stretch reads SIRNRTSQISPKPTQQ. Disordered stretches follow at residues 308 to 332, 345 to 364, 427 to 550, 571 to 614, 637 to 1332, and 1377 to 1415; these read SIRN…KKER, VTDS…TTTT, GLKG…GNMG, GERG…APGP, GPKG…DAGE, and IIGP…GPPG. The triple-helical region stretch occupies residues 424-1417; sequence ELTGLKGEPG…RGPPGPPGLP (994 aa). Collagen-like domains lie at 425 to 478, 493 to 552, 556 to 615, 622 to 681, 685 to 744, 748 to 807, and 811 to 870; these read LTGL…GNPG, GLVG…MGPK, GFIG…PGPV, GDMG…PGLP, GKPG…PGLE, GPVG…MGLA, and GDRG…RGPD. The span at 434-444 shows a compositional bias: pro residues; sequence LPGPPGPPGQP. Positions 491–506 are enriched in low complexity; it reads DPGLVGLPGQPGQPGR. 2 stretches are compositionally biased toward low complexity: residues 657–666 and 678–692; these read LGLPGEPGEP and PGLP…PQGK. Residues 733 to 742 are compositionally biased toward gly residues; sequence GIPGPGGLPG. 2 stretches are compositionally biased toward low complexity: residues 837-852 and 875-890; these read RGLS…HGSR and EKGM…PPGK. Collagen-like domains lie at 892–951, 952–1011, 1024–1083, 1084–1137, 1139–1198, 1199–1258, 1268–1327, and 1361–1420; these read GLSG…IGLP, GKAG…VGLE, GTEG…IGPK, GSRG…DGKV, GPPG…KGSK, GNKG…PGDL, GKPG…KGQP, and GPQG…PAVA. Residues 1040–1058 are compositionally biased toward basic and acidic residues; that stretch reads PEGKPGKIGERGKPGEKGS. A compositionally biased stretch (low complexity) spans 1112–1124; sequence HQGPQGSLGSPGP. Residues 1125–1137 show a composition bias toward basic and acidic residues; that stretch reads KGEKGEQGDDGKV. The span at 1215–1230 shows a compositional bias: low complexity; the sequence is NRGSPGPVGVPGPRGV. A compositionally biased stretch (gly residues) spans 1307 to 1316; that stretch reads GLNGGMGFPG. A compositionally biased stretch (pro residues) spans 1402–1415; the sequence is RGPPGPRGPPGPPG. Residues 1421 to 1658 constitute a propeptide, C-terminal propeptide; that stretch reads FSHENEALGA…HLEVGPVCFL (238 aa). Residues 1458-1658 form the Fibrillar collagen NC1 domain; sequence SEIFKTLHYL…HLEVGPVCFL (201 aa). 3 disulfides stabilise this stretch: Cys-1488–Cys-1520, Cys-1529–Cys-1656, and Cys-1565–Cys-1609. The Ca(2+) site is built by Asp-1506, Asn-1508, Cys-1511, and Asp-1514. Asn-1567 carries an N-linked (GlcNAc...) asparagine glycan.

This sequence belongs to the fibrillar collagen family. In terms of tissue distribution, weakly expressed in the notochord from the 6 somite stage. Expressed throughout the notochord at 13 somites, then becomes restricted to the distal tip of the notochord by 24 hpf. Also expressed in head cartilages by 48 hpf.

It localises to the secreted. Its subcellular location is the extracellular space. The protein resides in the extracellular matrix. Functionally, may play a role during the calcification of cartilage and the transition of cartilage to bone. Together with col27a1a, plays a role in development of the notochord and axial skeleton. In Danio rerio (Zebrafish), this protein is Collagen alpha-1(XXVII) chain B (col27a1b).